The following is a 397-amino-acid chain: Carbamoyl phosphate synthase small chain (397 aa).

The CPSase stretch occupies residues 1–204; the sequence is MKHVLRKEKT…NAKLKEKIWH (204 aa). 3 residues coordinate L-glutamine: serine 57, glycine 252, and glycine 254. The region spanning 204-391 is the Glutamine amidotransferase type-1 domain; sequence HVVVYDFGVK…IKLMKKSYNS (188 aa). Cysteine 280 serves as the catalytic Nucleophile. Residues leucine 281, glutamine 284, asparagine 322, and tyrosine 325 each contribute to the L-glutamine site. Active-site residues include histidine 364 and glutamate 366.

This sequence belongs to the CarA family. In terms of assembly, composed of two chains; the small (or glutamine) chain promotes the hydrolysis of glutamine to ammonia, which is used by the large (or ammonia) chain to synthesize carbamoyl phosphate. Tetramer of heterodimers (alpha,beta)4.

The catalysed reaction is hydrogencarbonate + L-glutamine + 2 ATP + H2O = carbamoyl phosphate + L-glutamate + 2 ADP + phosphate + 2 H(+). It carries out the reaction L-glutamine + H2O = L-glutamate + NH4(+). It participates in amino-acid biosynthesis; L-arginine biosynthesis; carbamoyl phosphate from bicarbonate: step 1/1. Its pathway is pyrimidine metabolism; UMP biosynthesis via de novo pathway; (S)-dihydroorotate from bicarbonate: step 1/3. In terms of biological role, small subunit of the glutamine-dependent carbamoyl phosphate synthetase (CPSase). CPSase catalyzes the formation of carbamoyl phosphate from the ammonia moiety of glutamine, carbonate, and phosphate donated by ATP, constituting the first step of 2 biosynthetic pathways, one leading to arginine and/or urea and the other to pyrimidine nucleotides. The small subunit (glutamine amidotransferase) binds and cleaves glutamine to supply the large subunit with the substrate ammonia. The protein is Carbamoyl phosphate synthase small chain of Buchnera aphidicola subsp. Baizongia pistaciae (strain Bp).